A 142-amino-acid polypeptide reads, in one-letter code: Cystatin-8 (142 aa).

The first 19 residues, 1-19 (MAKPLWLSLILFIIPVALA), serve as a signal peptide directing secretion. Asparagine 39 carries N-linked (GlcNAc...) asparagine glycosylation. Residues 77–81 (QITDR) carry the Secondary area of contact motif. Disulfide bonds link cysteine 95/cysteine 105 and cysteine 119/cysteine 139. Asparagine 100 carries an N-linked (GlcNAc...) asparagine glycan.

The protein belongs to the cystatin family. In terms of tissue distribution, proximal caput region of the epididymis. Lower expression in the testis. Within the testis it is localized to the elongating spermatids, whereas within the epididymis it is exclusively synthesized by the proximal caput epithelium.

The protein localises to the secreted. Functionally, performs a specialized role during sperm development and maturation. In Mus musculus (Mouse), this protein is Cystatin-8 (Cst8).